The chain runs to 393 residues: Sugar efflux transporter A (393 aa).

The next 12 helical transmembrane spans lie at 22–42, 51–71, 82–102, 107–127, 152–172, 174–194, 219–239, 253–273, 287–307, 308–328, 344–364, and 366–386; these read VIAF…SLFL, FMVG…SQIL, KTLI…YAWN, VLLF…PQLF, ISLS…GFGF, AMYL…WLLL, LLLF…LINM, LAGV…LLAG, LAVI…GSWA, LLAL…MGML, LFTN…GIVA, and VWSY…AAVC.

Belongs to the major facilitator superfamily. Set transporter family.

It is found in the cell inner membrane. Functionally, involved in the efflux of sugars. The physiological role may be the reduction of the intracellular concentration of toxic sugars or sugar metabolites. Transports IPTG, lactose and arabinose. This is Sugar efflux transporter A (sotA) from Dickeya chrysanthemi (Pectobacterium chrysanthemi).